The sequence spans 333 residues: uncharacterized protein (333 aa).

The Fe/B12 periplasmic-binding domain occupies 45–318 (NVIVSDSMFI…EYVKIIHPKI (274 aa)).

This is an uncharacterized protein from Methanocaldococcus jannaschii (strain ATCC 43067 / DSM 2661 / JAL-1 / JCM 10045 / NBRC 100440) (Methanococcus jannaschii).